We begin with the raw amino-acid sequence, 177 residues long: tRNA (cytidine(56)-2'-O)-methyltransferase (177 aa).

S-adenosyl-L-methionine is bound by residues Leu-83 and 108–112; that span reads GAEKV.

This sequence belongs to the aTrm56 family. As to quaternary structure, homodimer.

The protein localises to the cytoplasm. The enzyme catalyses cytidine(56) in tRNA + S-adenosyl-L-methionine = 2'-O-methylcytidine(56) in tRNA + S-adenosyl-L-homocysteine + H(+). Functionally, specifically catalyzes the AdoMet-dependent 2'-O-ribose methylation of cytidine at position 56 in tRNAs. This chain is tRNA (cytidine(56)-2'-O)-methyltransferase, found in Nitrosopumilus maritimus (strain SCM1).